Consider the following 752-residue polypeptide: Ribosomal RNA large subunit methyltransferase K/L (752 aa).

Residues Gln-53 to Leu-164 form the THUMP domain.

It belongs to the methyltransferase superfamily. RlmKL family.

The protein resides in the cytoplasm. It carries out the reaction guanosine(2445) in 23S rRNA + S-adenosyl-L-methionine = N(2)-methylguanosine(2445) in 23S rRNA + S-adenosyl-L-homocysteine + H(+). It catalyses the reaction guanosine(2069) in 23S rRNA + S-adenosyl-L-methionine = N(2)-methylguanosine(2069) in 23S rRNA + S-adenosyl-L-homocysteine + H(+). Specifically methylates the guanine in position 2445 (m2G2445) and the guanine in position 2069 (m7G2069) of 23S rRNA. This is Ribosomal RNA large subunit methyltransferase K/L from Saccharophagus degradans (strain 2-40 / ATCC 43961 / DSM 17024).